We begin with the raw amino-acid sequence, 959 residues long: MMS19 nucleotide excision repair protein (959 aa).

HEAT repeat units lie at residues 794-828 (QKLF…ATPQ), 832-871 (KLNI…QQDT), 874-915 (QGHL…YPTF), and 918-956 (LPHK…VGAP).

Belongs to the MET18/MMS19 family. Component of the CIA complex. Interacts with Xpd and galla-2. Binds to microtubules. As to expression, expressed in embryos (at protein level).

The protein resides in the cytoplasm. It localises to the cytoskeleton. The protein localises to the spindle. Its subcellular location is the nucleus. It is found in the midbody. In terms of biological role, key component of the cytosolic iron-sulfur protein assembly (CIA) complex, a multiprotein complex that mediates the incorporation of iron-sulfur cluster into apoproteins specifically involved in DNA metabolism and genomic integrity. In the CIA complex, MMS19 acts as an adapter between early-acting CIA components and a subset of cellular target iron-sulfur proteins. Essential for diploid cell cycles, organ growth and development. Regulates mitosis by binding to Xpd and thereby competing with the Xpd-mediated repression on the Cdk-activating kinase (CAK) complex. Regulates the centrosomal localization of the MT regulator tacc, a downstream target of aurA kinase. Binds to microtubules (MT). Regulates spindle and astral MT growth, MT stability and bundling. In neuroblasts, necessary for timely and coordinated spindle assembly and orientation which is necessary for mitotic progression. In young embryos, the maternal protein is important for progression through mitosis. The polypeptide is MMS19 nucleotide excision repair protein (Drosophila melanogaster (Fruit fly)).